The primary structure comprises 172 residues: Large ribosomal subunit protein eL20 (172 aa).

The protein belongs to the eukaryotic ribosomal protein eL20 family. Component of the large ribosomal subunit. Mature ribosomes consist of a small (40S) and a large (60S) subunit. The 40S subunit contains about 32 different proteins and 1 molecule of RNA (18S). The 60S subunit contains 45 different proteins and 3 molecules of RNA (25S, 5.8S and 5S).

The protein localises to the cytoplasm. Its function is as follows. Component of the ribosome, a large ribonucleoprotein complex responsible for the synthesis of proteins in the cell. The small ribosomal subunit (SSU) binds messenger RNAs (mRNAs) and translates the encoded message by selecting cognate aminoacyl-transfer RNA (tRNA) molecules. The large subunit (LSU) contains the ribosomal catalytic site termed the peptidyl transferase center (PTC), which catalyzes the formation of peptide bonds, thereby polymerizing the amino acids delivered by tRNAs into a polypeptide chain. The nascent polypeptides leave the ribosome through a tunnel in the LSU and interact with protein factors that function in enzymatic processing, targeting, and the membrane insertion of nascent chains at the exit of the ribosomal tunnel. This Candida albicans (strain SC5314 / ATCC MYA-2876) (Yeast) protein is Large ribosomal subunit protein eL20.